Here is a 152-residue protein sequence, read N- to C-terminus: Venom protein family 1 protein 2 (152 aa).

The first 21 residues, 1–21 (MAKLVFISFLVASFCLIGCFG), serve as a signal peptide directing secretion. An intrachain disulfide couples cysteine 70 to cysteine 150.

The protein belongs to the insect vpf1 family. In terms of tissue distribution, expressed by the venom gland (posterior main gland) (at protein level).

The protein localises to the secreted. The sequence is that of Venom protein family 1 protein 2 from Platymeris rhadamanthus (Red spot assassin bug).